The chain runs to 1136 residues: Nuclear pore complex protein Nup133 (1136 aa).

The disordered stretch occupies residues 1 to 26; that stretch reads MFSPRGTPGSGRRQAPRTGGRRSVSA.

This sequence belongs to the nucleoporin Nup133 family. In terms of assembly, forms part of the Nup160 subcomplex in the nuclear pore which is composed of NUP160, NUP133, NUP107 and Nup96. This complex plays a role in RNA export and in tethering Nup98 and NUP153 to the nucleus. In terms of tissue distribution, widely expressed in the embryo and in adult tissues. Higher expression is observed in the brain, testes, ovary, skin, and kidney.

Its subcellular location is the nucleus. The protein localises to the nuclear pore complex. It is found in the chromosome. It localises to the centromere. The protein resides in the kinetochore. Involved in poly(A)+ RNA transport. Involved in nephrogenesis. The polypeptide is Nuclear pore complex protein Nup133 (Danio rerio (Zebrafish)).